The chain runs to 409 residues: Diels-Alderase ucsH (409 aa).

The chain crosses the membrane as a helical span at residues 386 to 406 (IYFFICMLLAVVTFGYINILE).

It belongs to the Diels-Alderase family.

The protein resides in the membrane. It participates in mycotoxin biosynthesis. Its function is as follows. Diels-Alderase; part of the gene cluster that mediates the biosynthesis of UCS1025A, a member of the pyrrolizidinone family that acts as a strong telomerase inhibitor and displays potent antibacterial and antitumor properties. These compounds share a hemiaminal-containing pyrrolizidinone core fused with a gamma-lactone, giving a furopyrrolizidine that is connected to a decalin fragment. The polyketide synthase module (PKS) of the PKS-NRPS ucsA is responsible for the synthesis of the polyketide backbone via the condensation of an acetyl-CoA starter unit with 6 malonyl-CoA units. The downstream nonribosomal peptide synthetase (NRPS) module then amidates the carboxyl end of the polyketide with a 2S,3S-methylproline derived from L-isoleucine by the 2-oxoglutarate-dependent dioxygenase ucsF which converts L-isoleucine to (4S,5S)-4-methylpyrroline-5-carboxylate that is further converted to 2S,3S-methylproline by the pyrroline-5-carboxylate reductase ucsG. Reductive release of the completed aminoacyl polyketide from the assembly line can form the 3-pyrrolin-2-one structure via an intramolecular Knoevenagel reaction. Because ucsA lacks a designated enoylreductase (ER) domain, the required activity is provided the enoyl reductase ucsL. This keto acyclic precursor is the substrate of the Diels-Alderase ucsH, that catalyzes the Diels-Alder cycloaddition. Oxidation of the 3S-methyl group to a carboxylate by the cytochrome P450 monooxygenase ucsK allows an oxa-Michael cyclization that might involve the reductase/dehydrogenase ucsI and which furnishes the furopyrrolizidine. The oxidase ucsJ likely plays a critical role in stereoselective reduction of the C5-C6 double bond to afford the required R-configured carboxylate group. Further enolization and oxidation at C5 by an unidentified enzyme affords the last intermediate that can undergo oxa-Michael cyclization to yield UCS1025A. This is Diels-Alderase ucsH from Acremonium sp.